The following is a 149-amino-acid chain: Transcriptional regulator MraZ (149 aa).

SpoVT-AbrB domains are found at residues 6–52 (RSHR…PLPD) and 81–124 (AELM…DQGR).

It belongs to the MraZ family. In terms of assembly, forms oligomers.

It is found in the cytoplasm. It localises to the nucleoid. In Nitratidesulfovibrio vulgaris (strain DSM 19637 / Miyazaki F) (Desulfovibrio vulgaris), this protein is Transcriptional regulator MraZ.